The primary structure comprises 322 residues: MANIINLWNGIVPTVQDVNVASITAFKSMIDETWDKKIEANTCISRKHRNIIHEVIRDFMKAYPKMDENRKSPLGAPMQWLTQYYILKNEYHKTMLAYDNGSLNTKFKTLNIYMITNVGQYILYIVFCIISGKNHDGTPYIYDSEITSNDKNLINERIKYACKQILHGQLTIALRIRNKFMFIGSPMYLWFNVNGSQRRMKAEREIARKNCGGNPCERELKSERSNVKRLEYQLDAEKEKVKFYKRELERDRYLSSRYLTSSSDPHEKPLPNYTFPRIKNVSPLTTEATGSVEVAPPSTDVTEPISDVTPSVDVEPEHPPAF.

Residues 284-322 (LTTEATGSVEVAPPSTDVTEPISDVTPSVDVEPEHPPAF) form a disordered region.

The protein belongs to the chordopoxvirinae A26 protein family.

In terms of biological role, encodes a truncated version of poxvirus A26 protein. The polypeptide is Putative A-type inclusion protein (Vaccinia virus (strain Copenhagen) (VACV)).